The following is a 132-amino-acid chain: Small ribosomal subunit protein uS11 (132 aa).

Belongs to the universal ribosomal protein uS11 family. As to quaternary structure, part of the 30S ribosomal subunit.

Functionally, located on the platform of the 30S subunit. The sequence is that of Small ribosomal subunit protein uS11 from Sulfurisphaera tokodaii (strain DSM 16993 / JCM 10545 / NBRC 100140 / 7) (Sulfolobus tokodaii).